The following is a 329-amino-acid chain: NAD(+) hydrolase TcpA (329 aa).

In terms of domain architecture, MPN spans 5-134 (VSISYLALEQ…ADCVRFYTVR (130 aa)). A TIR domain is found at 192 to 324 (FEYDVFICHA…YVVNEILRVL (133 aa)). NAD(+)-binding positions include 201-202 (AH) and S231. The active site involves E267.

It carries out the reaction NAD(+) + H2O = ADP-D-ribose + nicotinamide + H(+). Functionally, NAD(+) hydrolase (NADase) that catalyzes cleavage of NAD(+) into ADP-D-ribose (ADPR) and nicotinamide. The protein is NAD(+) hydrolase TcpA of Theionarchaea archaeon (strain DG-70-1).